We begin with the raw amino-acid sequence, 485 residues long: Zinc finger protein 639 (485 aa).

Residues 1-14 are compositionally biased toward basic residues; it reads MNEYPKKRKRKTLH. The tract at residues 1–20 is disordered; sequence MNEYPKKRKRKTLHPSRYSD. Phosphoserine is present on Ser-60. Lys-76 is covalently cross-linked (Glycyl lysine isopeptide (Lys-Gly) (interchain with G-Cter in SUMO2)). Position 88 is a phosphoserine (Ser-88). Residues Lys-177, Lys-181, and Lys-226 each participate in a glycyl lysine isopeptide (Lys-Gly) (interchain with G-Cter in SUMO2) cross-link. 8 C2H2-type zinc fingers span residues 204 to 227, 233 to 255, 260 to 283, 289 to 311, 374 to 397, 403 to 425, 431 to 454, and 460 to 482; these read YKCE…ILKH, NVCR…AKLH, YICK…ADTH, YWCE…FQEH, FVCQ…AIEH, HVCD…LNSH, YLCQ…DFKH, and HKCS…LPVH. Positions 371-455 are interaction with CTNNA2; sequence KNFFVCQVCG…LKIHLDFKHS (85 aa).

It belongs to the krueppel C2H2-type zinc-finger protein family. Interacts with CTNNA2.

Its subcellular location is the nucleus. Its function is as follows. Binds DNA and may function as a transcriptional repressor. The sequence is that of Zinc finger protein 639 (ZNF639) from Bos taurus (Bovine).